A 307-amino-acid chain; its full sequence is Regulating synaptic membrane exocytosis protein 3 (307 aa).

The disordered stretch occupies residues 86 to 120 (STETGIAVEMRSRVTRQGSRESTDGSTNSNSSEGT). Residues 109-119 (DGSTNSNSSEG) show a composition bias toward polar residues. The 119-residue stretch at 155 to 273 (PMGDVHIAIM…DLSAAVTGWY (119 aa)) folds into the C2 domain. 2 positions are modified to phosphoserine: S294 and S297.

As to quaternary structure, binds PPFIA3. Does not bind RAB3.

Its subcellular location is the synapse. Functionally, regulates synaptic membrane exocytosis. The polypeptide is Regulating synaptic membrane exocytosis protein 3 (Rims3) (Mus musculus (Mouse)).